A 300-amino-acid chain; its full sequence is Ornithine carbamoyltransferase (300 aa).

Carbamoyl phosphate-binding positions include serine 49–threonine 52, glutamine 76, arginine 100, and histidine 127–glutamine 130. L-ornithine-binding positions include asparagine 158, aspartate 218, and serine 222 to methionine 223. Carbamoyl phosphate-binding positions include cysteine 258 to leucine 259 and arginine 286.

It belongs to the aspartate/ornithine carbamoyltransferase superfamily. OTCase family.

The protein resides in the cytoplasm. The catalysed reaction is carbamoyl phosphate + L-ornithine = L-citrulline + phosphate + H(+). It functions in the pathway amino-acid biosynthesis; L-arginine biosynthesis; L-arginine from L-ornithine and carbamoyl phosphate: step 1/3. Its function is as follows. Reversibly catalyzes the transfer of the carbamoyl group from carbamoyl phosphate (CP) to the N(epsilon) atom of ornithine (ORN) to produce L-citrulline. This is Ornithine carbamoyltransferase from Nitratidesulfovibrio vulgaris (strain ATCC 29579 / DSM 644 / CCUG 34227 / NCIMB 8303 / VKM B-1760 / Hildenborough) (Desulfovibrio vulgaris).